A 408-amino-acid chain; its full sequence is RNA exonuclease 4 (408 aa).

Positions 27-70 are disordered; that stretch reads TKEKDVSNSKAHNSRSSQSPSSSLRSSSRIQRKSKHSQGVGQYM. Low complexity predominate over residues 40-55; that stretch reads SRSSQSPSSSLRSSSR. The region spanning 131 to 292 is the Exonuclease domain; sequence QYLAIDCEMV…YRLHKKEWER (162 aa). Residues 310 to 322 are compositionally biased toward basic and acidic residues; the sequence is PEHVLGKRGHDEK. A disordered region spans residues 310-408; that stretch reads PEHVLGKRGH…GESWWEQPAA (99 aa). Over residues 343–357 the composition is skewed to gly residues; that stretch reads GNGGGRQQFPGGGRK. Positions 372-384 are enriched in basic and acidic residues; that stretch reads QRVDENGRGDGTS.

It belongs to the REXO4 family.

It is found in the nucleus. In terms of biological role, exoribonuclease involved in ribosome biosynthesis. Involved in the processing of ITS1, the internal transcribed spacer localized between the 18S and 5.8S rRNAs. The chain is RNA exonuclease 4 (REX4) from Cryptococcus neoformans var. neoformans serotype D (strain B-3501A) (Filobasidiella neoformans).